Reading from the N-terminus, the 174-residue chain is Disulfide bond formation protein B (174 aa).

The Cytoplasmic portion of the chain corresponds to 1–17 (MSFQVVTGWLDNSPRRI). A helical membrane pass occupies residues 18 to 34 (FAFVSLASIGMLAFGQY). At 35–52 (LQHVVGLEPCPMCIVQRY) the chain is on the periplasmic side. Cys-44 and Cys-47 are disulfide-bonded. The helical transmembrane segment at 53-67 (ALVLVAIIAGLTGAS) threads the bilayer. Topologically, residues 68 to 74 (GRKGLHL) are cytoplasmic. A helical membrane pass occupies residues 75–92 (GGAVLMLGSSGFGAYVAA). At 93-148 (RQSWLQWYPPEVVSCGRDFYGMIETFPLQRAIPMIFKGSGDCSKVDWTFLGGSIAN) the chain is on the periplasmic side. Cys-107 and Cys-134 form a disulfide bridge. The helical transmembrane segment at 149 to 167 (WTFVVFGLIVLLSLALIWR) threads the bilayer. Residues 168 to 174 (RVSRRVS) lie on the Cytoplasmic side of the membrane.

Belongs to the DsbB family.

Its subcellular location is the cell inner membrane. Functionally, required for disulfide bond formation in some periplasmic proteins. Acts by oxidizing the DsbA protein. The polypeptide is Disulfide bond formation protein B (Albidiferax ferrireducens (strain ATCC BAA-621 / DSM 15236 / T118) (Rhodoferax ferrireducens)).